A 1768-amino-acid polypeptide reads, in one-letter code: Gag-Pro-Pol polyprotein (1768 aa).

Gly-2 is lipidated: N-myristoyl glycine; by host. The propeptide occupies 101-159 (AAVTQTEKILKVSSQTDLRDNSHNKDMDLISLESDDEEAKAPSEKMTMSNKSPKKYPAM). The interval 132-152 (LESDDEEAKAPSEKMTMSNKS) is disordered. The PPXY motif signature appears at 200 to 203 (PPPY). The stretch at 215-251 (AVVNPKEELKEKISQLEEQIKLEELHQSLIIRLQKLK) forms a coiled coil. Residues 544–561 (GGCFKCGKKGHFAKDCRD) form a CCHC-type zinc finger. The disordered stretch occupies residues 589–622 (KSKTDSQGNPLPPHQGNRDEGPAPGPEASLWGSQ). In terms of domain architecture, Peptidase A2 spans 777–853 (FTGLIDTGAD…LPVNLWGRDL (77 aa)). Asp-782 serves as the catalytic Protease; shared with dimeric partner. One can recognise a G-patch domain in the interval 864 to 910 (PNDIVTAQMLAQGYSPGKGLGKREDGILQPIPNSGQLDRKGFGNFLA). Positions 956-1144 (LQAGHIIESN…DPYTYLGFQI (189 aa)) constitute a Reverse transcriptase domain. The Mg(2+) site is built by Asp-1021, Asp-1096, Asp-1097, Asp-1367, Glu-1396, Asp-1417, and Asp-1481. Residues 1358 to 1489 (LDNALLVFTD…TDLATKVVAT (132 aa)) form the RNase H type-1 domain. Residues 1493-1534 (TNLTEAQTAHALHHLNAQSLRLMFKITREQARQIVKQCPTCV) form an Integrase-type zinc finger. Residues His-1502, His-1506, Cys-1530, and Cys-1533 each coordinate Zn(2+). Residues 1547–1708 (KGLVPNMLWQ…AADRFWHTSS (162 aa)) enclose the Integrase catalytic domain. Positions 1558, 1615, and 1651 each coordinate Mg(2+). The segment at residues 1713 to 1762 (AMVKWKDPLDNTWHGPDPVLIWGRGSVCVYSQTHDAARWLPERLVRQVSN) is a DNA-binding region (integrase-type).

Belongs to the retroviral Pol polyprotein family. In terms of assembly, homodimer. As to quaternary structure, interacts with the G-patch peptide. Interacts with the reverse transcriptase/ribonuclease H. In terms of assembly, homotrimer. The cofactor is Mg(2+). In terms of processing, released by autocatalytic processing. The protease can undergo further autoprocessing to yield 2 shorter but enzymatically active forms of 12 kDa and 13 kDa. Post-translationally, myristoylated. Myristoylation of the matrix (MA) domain mediates the transport and binding of Gag polyproteins to the host plasma membrane and is required for the assembly of viral particles. Specific enzymatic cleavages in vivo yield mature proteins.

The protein resides in the virion. The enzyme catalyses DNA(n) + a 2'-deoxyribonucleoside 5'-triphosphate = DNA(n+1) + diphosphate. It catalyses the reaction Endonucleolytic cleavage to 5'-phosphomonoester.. It carries out the reaction dUTP + H2O = dUMP + diphosphate + H(+). Functionally, matrix protein. In terms of biological role, nucleocapsid protein p14: Nucleocapsid protein. Its function is as follows. Capsid protein. The aspartyl protease mediates proteolytic cleavages of Gag and Gag-Pol polyproteins during or shortly after the release of the virion from the plasma membrane. Cleavages take place as an ordered, step-wise cascade to yield mature proteins. This process is called maturation. Displays maximal activity during the budding process just prior to particle release from the cell. Functionally, enhances the activity of the reverse transcriptase. May be part of the mature RT. In terms of biological role, RT is a multifunctional enzyme that converts the viral dimeric RNA genome into dsDNA in the cytoplasm, shortly after virus entry into the cell. This enzyme displays a DNA polymerase activity that can copy either DNA or RNA templates, and a ribonuclease H (RNase H) activity that cleaves the RNA strand of RNA-DNA heteroduplexes in a partially processive 3' to 5' endonucleasic mode. Conversion of viral genomic RNA into dsDNA requires many steps. A tRNA binds to the primer-binding site (PBS) situated at the 5' end of the viral RNA. RT uses the 3' end of the tRNA primer to perfom a short round of RNA-dependent minus-strand DNA synthesis. The reading proceeds through the U5 region and ends after the repeated (R) region which is present at both ends of viral RNA. The portion of the RNA-DNA heteroduplex is digested by the RNase H, resulting in a ssDNA product attached to the tRNA primer. This ssDNA/tRNA hybridizes with the identical R region situated at the 3' end of viral RNA. This template exchange, known as minus-strand DNA strong stop transfer, can be either intra- or intermolecular. RT uses the 3' end of this newly synthesized short ssDNA to perfom the RNA-dependent minus-strand DNA synthesis of the whole template. RNase H digests the RNA template except for a polypurine tract (PPT) situated at the 5' end of the genome. It is not clear if both polymerase and RNase H activities are simultaneous. RNase H probably can proceed both in a polymerase-dependent (RNA cut into small fragments by the same RT performing DNA synthesis) and a polymerase-independent mode (cleavage of remaining RNA fragments by free RTs). Secondly, RT performs DNA-directed plus-strand DNA synthesis using the PPT that has not been removed by RNase H as primers. PPT and tRNA primers are then removed by RNase H. The 3' and 5' ssDNA PBS regions hybridize to form a circular dsDNA intermediate. Strand displacement synthesis by RT to the PBS and PPT ends produces a blunt ended, linear dsDNA copy of the viral genome that includes long terminal repeats (LTRs) at both ends. Its function is as follows. Catalyzes viral DNA integration into the host chromosome, by performing a series of DNA cutting and joining reactions. This is Gag-Pro-Pol polyprotein (pol) from Macaca mulatta (Rhesus macaque).